A 121-amino-acid chain; its full sequence is Small ribosomal subunit protein uS13 (121 aa).

Residues 89–121 (MRHRRGLPVRGQNTKNNARTRKGKKVSIAGKKK) form a disordered region. Residues 106–121 (ARTRKGKKVSIAGKKK) show a composition bias toward basic residues.

The protein belongs to the universal ribosomal protein uS13 family. In terms of assembly, part of the 30S ribosomal subunit. Forms a loose heterodimer with protein S19. Forms two bridges to the 50S subunit in the 70S ribosome.

Located at the top of the head of the 30S subunit, it contacts several helices of the 16S rRNA. In the 70S ribosome it contacts the 23S rRNA (bridge B1a) and protein L5 of the 50S subunit (bridge B1b), connecting the 2 subunits; these bridges are implicated in subunit movement. Contacts the tRNAs in the A and P-sites. The protein is Small ribosomal subunit protein uS13 of Latilactobacillus sakei subsp. sakei (strain 23K) (Lactobacillus sakei subsp. sakei).